The chain runs to 407 residues: 1-deoxy-D-xylulose 5-phosphate reductoisomerase (407 aa).

Positions 25, 26, 27, 28, 53, and 136 each coordinate NADPH. Lys-137 contacts 1-deoxy-D-xylulose 5-phosphate. Glu-138 lines the NADPH pocket. Asp-162 is a Mn(2+) binding site. 1-deoxy-D-xylulose 5-phosphate contacts are provided by Ser-163, Glu-164, Ser-188, and His-211. Mn(2+) is bound at residue Glu-164. Gly-217 contacts NADPH. Ser-224, Asn-229, Lys-230, and Glu-233 together coordinate 1-deoxy-D-xylulose 5-phosphate. A Mn(2+)-binding site is contributed by Glu-233.

Belongs to the DXR family. It depends on Mg(2+) as a cofactor. Requires Mn(2+) as cofactor.

It carries out the reaction 2-C-methyl-D-erythritol 4-phosphate + NADP(+) = 1-deoxy-D-xylulose 5-phosphate + NADPH + H(+). The protein operates within isoprenoid biosynthesis; isopentenyl diphosphate biosynthesis via DXP pathway; isopentenyl diphosphate from 1-deoxy-D-xylulose 5-phosphate: step 1/6. Functionally, catalyzes the NADPH-dependent rearrangement and reduction of 1-deoxy-D-xylulose-5-phosphate (DXP) to 2-C-methyl-D-erythritol 4-phosphate (MEP). In Bradyrhizobium diazoefficiens (strain JCM 10833 / BCRC 13528 / IAM 13628 / NBRC 14792 / USDA 110), this protein is 1-deoxy-D-xylulose 5-phosphate reductoisomerase.